A 442-amino-acid polypeptide reads, in one-letter code: Circumsporozoite protein (442 aa).

Residues 1–18 (MMRKLAILSVSSFLFVEA) form the signal peptide. The interval 69–357 (SRSLGENDDG…VKNNNNEEPS (289 aa)) is disordered. Positions 81 to 94 (DNGNNNNGNNNNGD) are enriched in low complexity. Basic and acidic residues predominate over residues 95–115 (NGREGKDEDKRDGNNEDNEKL). The interval 114–121 (KLRKPKHK) is required for the binding to heparan sulfate proteoglycans (HSPGs) on the surface of host hepatocytes. Residues 122 to 126 (KLKQP) are region I; contains the proteolytic cleavage site. Residues 130 to 318 (NPDPNANPNV…PNANPNANPN (189 aa)) show a composition bias toward low complexity. 46 consecutive repeat copies span residues 134–137 (NANP), 138–141 (NVDP), 142–145 (NANP), 146–149 (NVDP), 150–153 (NANP), 154–157 (NANP), 158–161 (NANP), 162–165 (NANP), 166–169 (NANP), 170–173 (NANP), 174–177 (NANP), 178–181 (NANP), 182–185 (NANP), 186–189 (NANP), 190–193 (NANP), 194–197 (NANP), 198–201 (NANP), 202–205 (NANP), 206–209 (NANP), 210–213 (NVDP), 214–217 (NANP), 218–221 (NANP), 222–225 (NANP), 226–229 (NANP), 230–233 (NANP), 234–237 (NANP), 238–241 (NANP), 242–245 (NANP), 246–249 (NANP), 250–253 (NANP), 254–257 (NANP), 258–261 (NANP), 262–265 (NANP), 266–269 (NANP), 270–273 (NANP), 274–277 (NANP), 278–281 (NANP), 282–285 (NANP), 286–289 (NANP), 290–293 (NANP), 294–297 (NANP), 298–301 (NANP), 302–305 (NANP), 306–309 (NANP), 310–313 (NANP), and 314–317 (NANP). Residues 134–317 (NANPNVDPNA…NPNANPNANP (184 aa)) are 46 X 4 AA tandem repeats of N-[AV]-[ND]-P. Over residues 319-334 (KNNQGNGQGHNMPNDP) the composition is skewed to polar residues. The span at 340 to 354 (ENANANNAVKNNNNE) shows a compositional bias: low complexity. Residues 367–420 (KIQNSLSTEWSPCSVTCGNGIQVRIKPGSADKPKDQLDYENDIEKKICKMEKCS) enclose the TSP type-1 domain. Intrachain disulfides connect Cys-379/Cys-414 and Cys-383/Cys-419. An O-linked (Fuc) threonine glycan is attached at Thr-382. A lipid anchor (GPI-anchor amidated cysteine) is attached at Cys-419. The propeptide at 420-442 (SSVFNVVNSSIGLIMVLSFLFLN) is removed in mature form.

It belongs to the plasmodium circumsporozoite protein family. Post-translationally, during host cell invasion, proteolytically cleaved at the cell membrane in the region I by a papain-like cysteine protease of parasite origin. Cleavage is triggered by the sporozoite contact with highly sulfated heparan sulfate proteoglycans (HSPGs) present on the host hepatocyte cell surface. Cleavage exposes the TSP type-1 (TSR) domain and is required for productive invasion of host hepatocytes but not for adhesion to the host cell membrane. Cleavage is dispensable for sporozoite development in the oocyst, motility and for traversal of host and vector cells. In terms of processing, O-glycosylated; maybe by POFUT2.

The protein localises to the cell membrane. It localises to the cytoplasm. In terms of biological role, essential sporozoite protein. In the mosquito vector, required for sporozoite development in the oocyst, migration through the vector hemolymph and entry into the vector salivary glands. In the vertebrate host, required for sporozoite migration through the host dermis and infection of host hepatocytes. Binds to highly sulfated heparan sulfate proteoglycans (HSPGs) on the surface of host hepatocytes. Its function is as follows. In the vertebrate host, binds to highly sulfated heparan sulfate proteoglycans (HSPGs) on the surface of host hepatocytes and is required for sporozoite invasion of the host hepatocytes. This is Circumsporozoite protein from Plasmodium falciparum (isolate Wellcome).